The sequence spans 873 residues: MHPPPPAAAMDFSQNSLFGYMEDLQELTIIERPVRRSLKTPEEIERLTVDEDLSDIERAVYLLSAGQDVQGTSVIANLPFLMRQNPTETLRRVLPKVREALHVAGVEMQLTAAMSFLTILQDESVSIHAYTHSFLQVILLHLEHRDTGVSNAWLETLLSVIEVLPKETLRHEILNPLVSKAQLSQTVQSRLVSCKILGKLTNKFDAHTIKREILPLVKSLCQDVEYEVRSCMCRQLENIAQGIGTELTKSVVLPELIELSRDEGSSVRLAAFETLVNLLDIFDTDDRSQTILPLVKSFCEKSFKADESILISLSFHLGKLCHGLYGIFTPDQHLRFLEFYKKLCTLGLQQENGHNENQIPPQILEQEKKYISVRKNCAYNFPAMIVFVDPKNFHMELYSTFFCLCHDPEVPVRYTIAICFYEVSKLLNSGVYLIHKELITLLQDESLEVLDALIDHLPEILELMSTGGESSVQENKLSSLPDLIPALTAAEQRAAASLKWRTHEKLLQKYACLPHVISSDQIYYRFLQRMFTIMMTNNVLPVQKAASRTLCIFLRYNRKQEQRHEVIQKLIEQLGQGKSYWNRLRFLDTCEFIIEIFSKSFFCKYFFLPAIELTHDPVANVRMKLCYLLPKVKSTLKIPADKHLLQQLEMCVRKLLCQEKDKDVLAIVKRTVLELDRMEMSMDAFQKKFYEKDLLDQEKEREELLLLEMEQLEKEKQQNDGRPMSDKMFEKKRRDTKTPTQSLPKNIPISVPGPSSVTPSTSKEIKKSKLIRSQSFNNQAFHAKYGNLEKCASKSSTTGYTTSVSGLGKTSVLSLADDSFRTRNASSVPSSFSPNTPLPSTSRGTGNSVDPKSSGSKDTQPRKATLKSRKSNP.

HEAT repeat units follow at residues I213–V251, V252–T290, and N392–L427. Residues Q686 to D720 adopt a coiled-coil conformation. The segment covering E713–K737 has biased composition (basic and acidic residues). The interval E713–K766 is disordered. The span at I747–S762 shows a compositional bias: low complexity. Phosphoserine is present on S775. A Phosphothreonine modification is found at T797. The span at T822 to D858 shows a compositional bias: polar residues. The tract at residues T822–P873 is disordered. The span at A864–P873 shows a compositional bias: basic residues.

In terms of assembly, serine/threonine-protein phosphatase 4 (PP4) occurs in different assemblies of the catalytic and one or more regulatory subunits. Component of the PP4 complex PPP4C-PPP4R4.

It localises to the cytoplasm. Functionally, putative regulatory subunit of serine/threonine-protein phosphatase 4. In Homo sapiens (Human), this protein is Serine/threonine-protein phosphatase 4 regulatory subunit 4 (PPP4R4).